A 605-amino-acid polypeptide reads, in one-letter code: Capsid scaffolding protein (605 aa).

Catalysis depends on charge relay system residues His-52, Ser-120, and His-139. Residues 326 to 344 (GEFVLIPTAYYSQLLTGQT) form an interaction with pAP region. The interaction with major capsid protein stretch occupies residues 585 to 605 (IQGSTADDADMFANQMMVGRC).

Belongs to the herpesviridae capsid scaffolding protein family. As to quaternary structure, homomultimer. Interacts with major capsid protein. In terms of assembly, exists in a monomer-dimer equilibrium with the dimer being the active species. In terms of processing, capsid scaffolding protein is cleaved by assemblin after formation of the spherical procapsid. As a result, the capsid obtains its mature, icosahedral shape. Cleavages occur at two or more sites: release (R-site) and maturation (M-site).

Its subcellular location is the host cytoplasm. It localises to the host nucleus. It carries out the reaction Cleaves -Ala-|-Ser- and -Ala-|-Ala- bonds in the scaffold protein.. Its function is as follows. Acts as a scaffold protein by binding major capsid protein in the cytoplasm, inducing the nuclear localization of both proteins. Multimerizes in the nucleus such as major capsid protein forms the icosahedral T=16 capsid. Autocatalytic cleavage releases the assembly protein, and subsequently abolishes interaction with major capsid protein. Cleavages products are evicted from the capsid before or during DNA packaging. In terms of biological role, protease that plays an essential role in virion assembly within the nucleus. Catalyzes the cleavage of the assembly protein after formation of the spherical procapsid. By that cleavage, the capsid matures and gains its icosahedral shape. The cleavage sites seem to include -Ala-Ser-, -Ala-Ala-, as well as Ala-Thr bonds. Assemblin and cleavages products are evicted from the capsid before or during DNA packaging. Functionally, plays a major role in capsid assembly. Acts as a scaffold protein by binding major capsid protein. Multimerizes in the nucleus such as major capsid protein forms the icosahedral T=16 capsid. Cleaved by assemblin after capsid completion. The cleavages products are evicted from the capsid before or during DNA packaging. The protein is Capsid scaffolding protein (33) of Varicella-zoster virus (strain Dumas) (HHV-3).